Consider the following 79-residue polypeptide: Exodeoxyribonuclease 7 small subunit (79 aa).

The protein belongs to the XseB family. As to quaternary structure, heterooligomer composed of large and small subunits.

The protein resides in the cytoplasm. It catalyses the reaction Exonucleolytic cleavage in either 5'- to 3'- or 3'- to 5'-direction to yield nucleoside 5'-phosphates.. Functionally, bidirectionally degrades single-stranded DNA into large acid-insoluble oligonucleotides, which are then degraded further into small acid-soluble oligonucleotides. The sequence is that of Exodeoxyribonuclease 7 small subunit from Dechloromonas aromatica (strain RCB).